Reading from the N-terminus, the 44-residue chain is Conotoxin Fi11.11 (44 aa).

4 disulfide bridges follow: cysteine 1-cysteine 15, cysteine 8-cysteine 20, cysteine 14-cysteine 24, and cysteine 19-cysteine 28. Asparagine 30 bears the Asparagine amide mark. Positions 35-44 (QVPLKSFGQR) are excised as a propeptide.

Belongs to the conotoxin I2 superfamily. As to expression, expressed by the venom duct.

It localises to the secreted. The chain is Conotoxin Fi11.11 from Conus figulinus (Fig cone).